The sequence spans 212 residues: Ribosomal RNA small subunit methyltransferase G (212 aa).

S-adenosyl-L-methionine-binding positions include glycine 73, 127-128 (IE), and arginine 143.

Belongs to the methyltransferase superfamily. RNA methyltransferase RsmG family.

It localises to the cytoplasm. The catalysed reaction is guanosine(527) in 16S rRNA + S-adenosyl-L-methionine = N(7)-methylguanosine(527) in 16S rRNA + S-adenosyl-L-homocysteine. Its function is as follows. Specifically methylates the N7 position of guanine in position 527 of 16S rRNA. This is Ribosomal RNA small subunit methyltransferase G from Methylobacterium nodulans (strain LMG 21967 / CNCM I-2342 / ORS 2060).